We begin with the raw amino-acid sequence, 341 residues long: Phenylalanine--tRNA ligase alpha subunit (341 aa).

E254 lines the Mg(2+) pocket.

It belongs to the class-II aminoacyl-tRNA synthetase family. Phe-tRNA synthetase alpha subunit type 1 subfamily. In terms of assembly, tetramer of two alpha and two beta subunits. Mg(2+) is required as a cofactor.

Its subcellular location is the cytoplasm. The catalysed reaction is tRNA(Phe) + L-phenylalanine + ATP = L-phenylalanyl-tRNA(Phe) + AMP + diphosphate + H(+). This is Phenylalanine--tRNA ligase alpha subunit from Chlorobium limicola (strain DSM 245 / NBRC 103803 / 6330).